Reading from the N-terminus, the 279-residue chain is Thymidylate synthase (279 aa).

A dUMP-binding site is contributed by 141–142 (RR). C161 (nucleophile) is an active-site residue. Residues 181 to 184 (RSND), N192, and 222 to 224 (HVY) each bind dUMP. D184 is a binding site for (6R)-5,10-methylene-5,6,7,8-tetrahydrofolate. Residue A278 coordinates (6R)-5,10-methylene-5,6,7,8-tetrahydrofolate.

The protein belongs to the thymidylate synthase family. In terms of assembly, homodimer.

The catalysed reaction is dUMP + (6R)-5,10-methylene-5,6,7,8-tetrahydrofolate = 7,8-dihydrofolate + dTMP. Its pathway is pyrimidine metabolism; dTTP biosynthesis. Its function is as follows. Provides the sole de novo source of dTMP for DNA biosynthesis. The protein is Thymidylate synthase (thyP3) of Bacillus subtilis (Bacteriophage phi-3T).